Reading from the N-terminus, the 429-residue chain is 3-phosphoshikimate 1-carboxyvinyltransferase (429 aa).

Residues Lys11, Ser12, and Arg16 each coordinate 3-phosphoshikimate. Position 11 (Lys11) interacts with phosphoenolpyruvate. Positions 82 and 110 each coordinate phosphoenolpyruvate. Positions 155, 157, 302, and 329 each coordinate 3-phosphoshikimate. Gln157 is a phosphoenolpyruvate binding site. The active-site Proton acceptor is Asp302. Phosphoenolpyruvate-binding residues include Arg333 and Arg385.

This sequence belongs to the EPSP synthase family. As to quaternary structure, monomer.

It localises to the cytoplasm. It catalyses the reaction 3-phosphoshikimate + phosphoenolpyruvate = 5-O-(1-carboxyvinyl)-3-phosphoshikimate + phosphate. Its pathway is metabolic intermediate biosynthesis; chorismate biosynthesis; chorismate from D-erythrose 4-phosphate and phosphoenolpyruvate: step 6/7. Catalyzes the transfer of the enolpyruvyl moiety of phosphoenolpyruvate (PEP) to the 5-hydroxyl of shikimate-3-phosphate (S3P) to produce enolpyruvyl shikimate-3-phosphate and inorganic phosphate. This chain is 3-phosphoshikimate 1-carboxyvinyltransferase, found in Helicobacter pylori (strain P12).